Here is a 249-residue protein sequence, read N- to C-terminus: 2,3-bisphosphoglycerate-dependent phosphoglycerate mutase (249 aa).

Substrate is bound by residues 9-16, 22-23, R61, 88-91, K99, 115-116, and 184-185; these read RHGQSQWN, TG, ERHY, RR, and GN. Catalysis depends on H10, which acts as the Tele-phosphohistidine intermediate. E88 (proton donor/acceptor) is an active-site residue.

Belongs to the phosphoglycerate mutase family. BPG-dependent PGAM subfamily. In terms of assembly, homodimer.

The enzyme catalyses (2R)-2-phosphoglycerate = (2R)-3-phosphoglycerate. The protein operates within carbohydrate degradation; glycolysis; pyruvate from D-glyceraldehyde 3-phosphate: step 3/5. Its function is as follows. Catalyzes the interconversion of 2-phosphoglycerate and 3-phosphoglycerate. This is 2,3-bisphosphoglycerate-dependent phosphoglycerate mutase from Xylella fastidiosa (strain 9a5c).